Here is a 198-residue protein sequence, read N- to C-terminus: MTLVTQKAPNFIAPAILKNGKIMNNFDLKKYSNGQITVLFFWPMDFTFVCPSEIIEFNKTFEAFEKRNVKIVGVSIDSVFVHQAWQNTFPENGGIGKIKFPMVSDIKHEIQKSYHIEHPELNIALRASFLIDENWIIRHQVVNDLPFGRNIDEMIRMIDALNFHNKYGEVCPVNWKHGQEGMKASQEGVSSYLKKYFS.

A Thioredoxin domain is found at 2–163 (TLVTQKAPNF…MIRMIDALNF (162 aa)). Cys50 acts as the Cysteine sulfenic acid (-SOH) intermediate in catalysis.

The protein belongs to the peroxiredoxin family. AhpC/Prx1 subfamily. Homodimer; disulfide-linked, upon oxidation. 5 homodimers assemble to form a ring-like decamer.

It localises to the cytoplasm. It carries out the reaction a hydroperoxide + NADH + H(+) = an alcohol + NAD(+) + H2O. Functionally, thiol-specific peroxidase that catalyzes the reduction of hydrogen peroxide and organic hydroperoxides to water and alcohols, respectively. Plays a role in cell protection against oxidative stress by detoxifying peroxides. In Buchnera aphidicola subsp. Schizaphis graminum (strain Sg), this protein is Alkyl hydroperoxide reductase C.